The primary structure comprises 326 residues: Pyruvate dehydrogenase E1 component subunit alpha (326 aa).

As to quaternary structure, heterodimer of an alpha and a beta chain. Thiamine diphosphate is required as a cofactor.

The catalysed reaction is N(6)-[(R)-lipoyl]-L-lysyl-[protein] + pyruvate + H(+) = N(6)-[(R)-S(8)-acetyldihydrolipoyl]-L-lysyl-[protein] + CO2. In terms of biological role, the pyruvate dehydrogenase complex catalyzes the overall conversion of pyruvate to acetyl-CoA and CO(2). It contains multiple copies of three enzymatic components: pyruvate dehydrogenase (E1), dihydrolipoamide acetyltransferase (E2) and lipoamide dehydrogenase (E3). The sequence is that of Pyruvate dehydrogenase E1 component subunit alpha (pdhA) from Rickettsia conorii (strain ATCC VR-613 / Malish 7).